A 243-amino-acid polypeptide reads, in one-letter code: Protein Thf1 (243 aa).

Residues 180-224 (SKARVEKDLNLYKSNLEKMAQAVELTEQILESERRKREQNESAKL) adopt a coiled-coil conformation. The span at 210 to 220 (ESERRKREQNE) shows a compositional bias: basic and acidic residues. The disordered stretch occupies residues 210–243 (ESERRKREQNESAKLNTGSSEQMSQGVEACSNIS). A compositionally biased stretch (polar residues) spans 221–243 (SAKLNTGSSEQMSQGVEACSNIS).

This sequence belongs to the THF1 family.

Functionally, may be involved in photosynthetic membrane biogenesis. This Prochlorococcus marinus (strain MIT 9313) protein is Protein Thf1.